An 889-amino-acid chain; its full sequence is Phosphatidylinositol 3-kinase VPS34 (889 aa).

The C2 PI3K-type domain occupies 34 to 184 (ASEKLIDPQL…EWIDELVLKK (151 aa)). The PIK helical domain occupies 298-540 (SDKHVKPDAK…ESFLSRLNSN (243 aa)). Positions 607-873 (MIDQCNVFKS…LINDSVNALL (267 aa)) constitute a PI3K/PI4K catalytic domain. Residues 613–619 (VFKSSLS) form a G-loop region. The segment at 742-750 (GVGDRHLDN) is catalytic loop. Positions 761–782 (HADFGYILGQDPKPFPPLMKLP) are activation loop.

It belongs to the PI3/PI4-kinase family. Type III PI4K subfamily. Component of the autophagy-specific VPS34 PI3-kinase complex I composed of VPS15, VPS30, VPS34, ATG14 and ATG38; and of the VPS34 PI3-kinase complex II composed of VPS15, VPS30, VPS34 and VPS38. Autophosphorylated.

The protein localises to the golgi apparatus. It localises to the trans-Golgi network membrane. Its subcellular location is the endosome membrane. The enzyme catalyses a 1,2-diacyl-sn-glycero-3-phospho-(1D-myo-inositol) + ATP = a 1,2-diacyl-sn-glycero-3-phospho-(1D-myo-inositol-3-phosphate) + ADP + H(+). Multifunctional phosphatidylinositol 3-kinase that plays a role in signaling in modulation of host immune response, intracellular survival and virulence. Catalytic subunit of the autophagy-specific VPS34 PI3-kinase complex I essential to recruit the ATG8-phosphatidylinositol conjugate and the ATG12-ATG5 conjugate to the pre-autophagosomal structure. Also involved in endosome-to-Golgi retrograde transport as part of the VPS34 PI3-kinase complex II. This second complex is required for the endosome-to-Golgi retrieval of PEP1 and KEX2, and the recruitment of VPS5 and VPS7, two components of the retromer complex, to endosomal membranes (probably through the synthesis of a specific pool of phosphatidylinositol 3-phosphate recruiting the retromer to the endosomes). Finally, it might also be involved in ethanol tolerance and cell wall integrity. This chain is Phosphatidylinositol 3-kinase VPS34, found in Candida glabrata (strain ATCC 2001 / BCRC 20586 / JCM 3761 / NBRC 0622 / NRRL Y-65 / CBS 138) (Yeast).